The primary structure comprises 776 residues: Glucocorticoid receptor (776 aa).

Polar residues predominate over residues 1–11 (MDSKESLTSPS). Residues 1–25 (MDSKESLTSPSEEIPSSVHGQERGN) are disordered. Residues 1-419 (MDSKESLTSP…LSAVGPPPKF (419 aa)) are modulating. Phosphothreonine is present on T8. R23 carries the post-translational modification Omega-N-methylarginine. Residues S45, S113, and S134 each carry the phosphoserine modification. A disordered region spans residues 157–178 (PETPSDVSSEQQNLKGQTGTNG). The span at 161–174 (SDVSSEQQNLKGQT) shows a compositional bias: polar residues. Phosphoserine is present on residues S203, S211, and S226. K258 participates in a covalent cross-link: Glycyl lysine isopeptide (Lys-Gly) (interchain with G-Cter in SUMO2). S267 carries the phosphoserine modification. Glycyl lysine isopeptide (Lys-Gly) (interchain with G-Cter in SUMO); alternate cross-links involve residues K277 and K293. Residues K277 and K293 each participate in a glycyl lysine isopeptide (Lys-Gly) (interchain with G-Cter in SUMO2); alternate cross-link. Phosphoserine is present on residues S307 and S404. The segment at residues 417 to 492 (PKFCLVCSDE…AGMNLEARKT (76 aa)) is a DNA-binding region (nuclear receptor). K418 participates in a covalent cross-link: Glycyl lysine isopeptide (Lys-Gly) (interchain with G-Cter in ubiquitin). 2 consecutive NR C4-type zinc fingers follow at residues 420-440 (CLVC…CGSC) and 456-480 (CAGR…YRKC). Residues K479, K491, K493, and K494 each carry the N6-acetyllysine modification. Residues 484–776 (GMNLEARKTK…NIKKLLFHQK (293 aa)) form an interaction with CLOCK region. The segment at 486 to 522 (NLEARKTKKKIKGIQQTTTGISQETPENSANKTIVPA) is hinge. The region spanning 523–757 (TLPQLTPTPV…FPEMLAEIIT (235 aa)) is the NR LBD domain. Positions 531–696 (PVSLLEVIEP…EIRMTYIKEL (166 aa)) are interaction with CRY1. Residue K702 forms a Glycyl lysine isopeptide (Lys-Gly) (interchain with G-Cter in SUMO) linkage.

The protein belongs to the nuclear hormone receptor family. NR3 subfamily. Heteromultimeric cytoplasmic complex with HSP90AA1, HSPA1A/HSPA1B, and FKBP5 or another immunophilin such as PPID, STIP1, or the immunophilin homolog PPP5C. Upon ligand binding FKBP5 dissociates from the complex and FKBP4 takes its place, thereby linking the complex to dynein and mediating transport to the nucleus, where the complex dissociates. Probably forms a complex composed of chaperones HSP90 and HSP70, co-chaperones CDC37, PPP5C, TSC1 and client protein TSC2, CDK4, AKT, RAF1 and NR3C1; this complex does not contain co-chaperones STIP1/HOP and PTGES3/p23. Directly interacts with UNC45A. Binds to DNA as a homodimer, and as heterodimer with NR3C2 or the retinoid X receptor. Binds STAT5A and STAT5B homodimers and heterodimers. Interacts with NRIP1, POU2F1, POU2F2 and TRIM28. Interacts with several coactivator complexes, including the SMARCA4 complex, CREBBP/EP300, TADA2L (Ada complex) and p160 coactivators such as NCOA2 and NCOA6. Interaction with BAG1 inhibits transactivation. Interacts with HEXIM1 and TGFB1I1. Interacts with NCOA1. Interacts with NCOA3, SMARCA4, SMARCC1, SMARCD1, and SMARCE1. Interacts with CLOCK, CRY1 and CRY2 in a ligand-dependent fashion. Interacts with CIART. Interacts with RWDD3. Interacts with UBE2I/UBC9 and this interaction is enhanced in the presence of RWDD3. Interacts with GRIP1. Interacts with NR4A3 (via nuclear receptor DNA-binding domain), represses transcription activity of NR4A3 on the POMC promoter Nur response element (NurRE). Directly interacts with PNRC2 to attract and form a complex with UPF1 and DCP1A; the interaction leads to rapid mRNA degradation. Interacts with GSK3B. Interacts with FNIP1 and FNIP2. Interacts (via C-terminus) with NR3C1 (via C-terminus). Interacts with MCM3AP. Interacts (via domain NR LBD) with HSP90AA1 and HSP90AB1. In the absence of hormonal ligand, interacts with TACC1. Post-translationally, acetylation by CLOCK reduces its binding to glucocorticoid response elements and its transcriptional activity. In terms of processing, increased proteasome-mediated degradation in response to glucocorticoids. Phosphorylated in the absence of hormone; becomes hyperphosphorylated in the presence of glucocorticoid. The Ser-203, Ser-226 and Ser-404-phosphorylated forms are mainly cytoplasmic, and the Ser-211-phosphorylated form is nuclear. Phosphorylation at Ser-211 increases transcriptional activity. Phosphorylation at Ser-203, Ser-226 and Ser-404 decreases signaling capacity. Phosphorylation at Ser-404 may protect from glucocorticoid-induced apoptosis. Phosphorylation at Ser-203 and Ser-211 is not required in regulation of chromosome segregation. May be dephosphorylated by PPP5C, attenuates NR3C1 action. Post-translationally, sumoylation at Lys-277 and Lys-293 negatively regulates its transcriptional activity. Sumoylation at Lys-702 positively regulates its transcriptional activity in the presence of RWDD3. Sumoylation at Lys-277 and Lys-293 is dispensable whereas sumoylation at Lys-702 is critical for the stimulatory effect of RWDD3 on its transcriptional activity. Heat shock increases sumoylation in a RWDD3-dependent manner. In terms of processing, ubiquitinated by UBR5, leading to its degradation: UBR5 specifically recognizes and binds ligand-bound NR3C1 when it is not associated with coactivators (NCOAs). In presence of NCOAs, the UBR5-degron is not accessible, preventing its ubiquitination and degradation.

It localises to the cytoplasm. The protein localises to the nucleus. The protein resides in the mitochondrion. Its subcellular location is the cytoskeleton. It is found in the spindle. It localises to the microtubule organizing center. The protein localises to the centrosome. The protein resides in the chromosome. Its subcellular location is the nucleoplasm. Its function is as follows. Receptor for glucocorticoids (GC). Has a dual mode of action: as a transcription factor that binds to glucocorticoid response elements (GRE), both for nuclear and mitochondrial DNA, and as a modulator of other transcription factors. Affects inflammatory responses, cellular proliferation and differentiation in target tissues. Involved in chromatin remodeling. Plays a role in rapid mRNA degradation by binding to the 5' UTR of target mRNAs and interacting with PNRC2 in a ligand-dependent manner which recruits the RNA helicase UPF1 and the mRNA-decapping enzyme DCP1A, leading to RNA decay. Could act as a coactivator for STAT5-dependent transcription upon growth hormone (GH) stimulation and could reveal an essential role of hepatic GR in the control of body growth. Mediates glucocorticoid-induced apoptosis. Promotes accurate chromosome segregation during mitosis. May act as a tumor suppressor. May play a negative role in adipogenesis through the regulation of lipolytic and antilipogenic gene expression. The protein is Glucocorticoid receptor (NR3C1) of Tupaia belangeri (Common tree shrew).